A 230-amino-acid polypeptide reads, in one-letter code: Large ribosomal subunit protein uL1c (230 aa).

The protein belongs to the universal ribosomal protein uL1 family. In terms of assembly, part of the 50S ribosomal subunit.

The protein localises to the plastid. It is found in the chloroplast. Its function is as follows. Binds directly to 23S rRNA. Might be involved in E site tRNA release (Potential). The sequence is that of Large ribosomal subunit protein uL1c (rpl1) from Thalassiosira pseudonana (Marine diatom).